The primary structure comprises 95 residues: Small ribosomal subunit protein bS20 (95 aa).

2 disordered regions span residues 1–26 and 76–95; these read MALR…RSRK and KSRL…AQPA. A compositionally biased stretch (low complexity) spans 80–95; that stretch reads AKALNKAKAAQAAQPA.

The protein belongs to the bacterial ribosomal protein bS20 family.

Its function is as follows. Binds directly to 16S ribosomal RNA. The chain is Small ribosomal subunit protein bS20 from Deinococcus geothermalis (strain DSM 11300 / CIP 105573 / AG-3a).